Here is a 173-residue protein sequence, read N- to C-terminus: Ribosome maturation factor RimM (173 aa).

The PRC barrel domain occupies 95–169 (EGSYYFKDIL…RIEVTLLEGL (75 aa)).

Belongs to the RimM family. In terms of assembly, binds ribosomal protein uS19.

Its subcellular location is the cytoplasm. Functionally, an accessory protein needed during the final step in the assembly of 30S ribosomal subunit, possibly for assembly of the head region. Essential for efficient processing of 16S rRNA. May be needed both before and after RbfA during the maturation of 16S rRNA. It has affinity for free ribosomal 30S subunits but not for 70S ribosomes. In Lactobacillus johnsonii (strain CNCM I-12250 / La1 / NCC 533), this protein is Ribosome maturation factor RimM.